We begin with the raw amino-acid sequence, 641 residues long: Putative phagocytic receptor 1a (641 aa).

The signal sequence occupies residues 1-23 (MKINKKQIVFFILFSIFLNHVNG). At 24–279 (IFYLPGMIPH…ESNDNSVHWF (256 aa)) the chain is on the extracellular side. Residues 280-300 (SILNSLMIVFILTVMVAMIII) form a helical membrane-spanning segment. Over 301 to 349 (RTLKKDIRRYTSIDTSEDRDSQEETGWKMIHGDVFRPPSHPMLLSVCIG) the chain is Cytoplasmic. Residues 350 to 370 (SGVQIFSMTLITMIFAVLGFL) form a helical membrane-spanning segment. At 371-374 (SPAN) the chain is on the extracellular side. The chain crosses the membrane as a helical span at residues 375–395 (IGGLATALIVLFVLSAMFAGY). Residues 396 to 413 (FSTRVFTIFKGRNWKKNT) are Cytoplasmic-facing. Residues 414–434 (IYTALSMPGIIFGIFFFVNMF) form a helical membrane-spanning segment. Residues 435–445 (LRGAKSSAAVP) lie on the Extracellular side of the membrane. Residues 446 to 466 (FGTFASIIAMWFGISVPLVFL) form a helical membrane-spanning segment. Residues 467-502 (GSYFASKKPVPEDPVRTNQIPRQVPDQIWYMNPYLS) lie on the Cytoplasmic side of the membrane. Residues 503–523 (ILMGGILPFGAVFIELHFILT) traverse the membrane as a helical segment. Over 524-532 (SLWDNQFYY) the chain is Extracellular. The helical transmembrane segment at 533 to 553 (IFGFLFIVLMILIVTSAEISI) threads the bilayer. The Cytoplasmic portion of the chain corresponds to 554 to 578 (VMCYFQLCAEDHHWWWRSFLTAGSS). The helical transmembrane segment at 579–599 (SLYMFIYSVSFFRYLGITKFI) threads the bilayer. Residues 600–608 (SSLLDFSYS) are Extracellular-facing. The chain crosses the membrane as a helical span at residues 609-629 (FIMSLAFAALTGTIGFYSCYF). At 630–641 (LVRKIYSSIHIN) the chain is on the cytoplasmic side.

This sequence belongs to the nonaspanin (TM9SF) (TC 9.A.2) family.

It localises to the membrane. Its function is as follows. Involved in adhesion, phagocytosis of hydrophilic particles and intracellular killing of bacteria. Associates with proteins harboring glycine-rich transmembrane domains and ensures their efficient localization to the cell surface. This is Putative phagocytic receptor 1a (phg1a) from Dictyostelium discoideum (Social amoeba).